Consider the following 272-residue polypeptide: Orotidine 5'-phosphate decarboxylase (272 aa).

The active-site Proton donor is the lysine 95.

This sequence belongs to the OMP decarboxylase family. Type 2 subfamily.

It catalyses the reaction orotidine 5'-phosphate + H(+) = UMP + CO2. It functions in the pathway pyrimidine metabolism; UMP biosynthesis via de novo pathway; UMP from orotate: step 2/2. This Cupriavidus taiwanensis (strain DSM 17343 / BCRC 17206 / CCUG 44338 / CIP 107171 / LMG 19424 / R1) (Ralstonia taiwanensis (strain LMG 19424)) protein is Orotidine 5'-phosphate decarboxylase.